The sequence spans 417 residues: Phosphoglycerate kinase 2 (417 aa).

N-acetylserine is present on Ser2. Phosphoserine occurs at positions 2 and 4. Lys11 carries the post-translational modification N6-acetyllysine. Positions 23, 24, 25, 26, 38, and 39 each coordinate (2R)-3-phosphoglycerate. Lys48 is subject to N6-acetyllysine. Ser62, His63, Gly65, and Arg66 together coordinate (2R)-3-phosphoglycerate. N6-acetyllysine occurs at positions 75, 86, and 97. 2 residues coordinate (2R)-3-phosphoglycerate: Leu122 and Arg123. N6-acetyllysine is present on residues Lys131 and Lys146. (2R)-3-phosphoglycerate-binding residues include His170 and Arg171. Tyr196 carries the phosphotyrosine modification. At Lys199 the chain carries N6-acetyllysine. Gly214 is a binding site for ADP. Residue Gly214 coordinates CDP. Ala215 and Lys216 together coordinate AMP. Ala215 serves as a coordination point for ATP. Ala215 contributes to the Mg(2+) binding site. The Mg(2+) site is built by Ala218 and Asp219. A CDP-binding site is contributed by Asp219. Lys220 is a binding site for AMP. An ATP-binding site is contributed by Lys220. Residue Gly238 participates in ADP binding. Gly238 lines the CDP pocket. Residue Gly239 participates in AMP binding. Gly239 lines the ATP pocket. Residues Lys267 and Lys291 each carry the N6-acetyllysine modification. Gly313 is an AMP binding site. Gly313 lines the ATP pocket. Residues Gly338 and Phe343 each contribute to the CDP site. Phe343 contacts ADP. Glu344 is an AMP binding site. ATP is bound by residues Glu344, Asp375, and Thr376. Asp375 serves as a coordination point for Mg(2+).

It belongs to the phosphoglycerate kinase family. As to quaternary structure, monomer. It depends on Mg(2+) as a cofactor. In terms of tissue distribution, mainly found in round spermatids. Localized on the principle piece in the sperm (at protein level). Testis-specific. Expression significantly decreased in the testis of elderly men.

It localises to the cytoplasm. The enzyme catalyses (2R)-3-phosphoglycerate + ATP = (2R)-3-phospho-glyceroyl phosphate + ADP. Its pathway is carbohydrate degradation; glycolysis; pyruvate from D-glyceraldehyde 3-phosphate: step 2/5. Its function is as follows. Essential for sperm motility and male fertility. Not required for the completion of spermatogenesis. The protein is Phosphoglycerate kinase 2 (PGK2) of Homo sapiens (Human).